The following is a 107-amino-acid chain: Class I hydrophobin hgfI (107 aa).

The signal sequence occupies residues 1–24; it reads MFSKLAIFATAAFAVLAAATPVRR. Disulfide bonds link cysteine 27/cysteine 88, cysteine 34/cysteine 82, cysteine 35/cysteine 68, and cysteine 89/cysteine 102.

Belongs to the fungal hydrophobin family. Self-assembles to form functional amyloid fibrils called rodlets with a length range 100-150 nm. Self-assembly into fibrillar rodlets occurs spontaneously at hydrophobic:hydrophilic interfaces and the rodlets further associate laterally to form amphipathic monolayers. Only weekly expressed in hyphae cultured in liquid medium.

It is found in the secreted. It localises to the cell wall. Aerial growth, conidiation, and dispersal of filamentous fungi in the environment rely upon a capability of their secreting small amphipathic proteins called hydrophobins (HPBs) with low sequence identity. Class I can self-assemble into an outermost layer of rodlet bundles on aerial cell surfaces, conferring cellular hydrophobicity that supports fungal growth, development and dispersal; whereas Class II form highly ordered films at water-air interfaces through intermolecular interactions but contribute nothing to the rodlet structure. HgfI is a class I hydrophobin that is involved in cell surface hydrophobicity and lowers the surface tension of water and change the nature of the surfaces to which it adsorbs. In Grifola frondosa (Maitake), this protein is Class I hydrophobin hgfI.